The sequence spans 567 residues: Urease subunit alpha (567 aa).

Residues 128–567 (GGIDAHVHFI…LPMSQRYFLF (440 aa)) enclose the Urease domain. The Ni(2+) site is built by H133, H135, and K216. N6-carboxylysine is present on K216. Residue H218 participates in substrate binding. Ni(2+) is bound by residues H245 and H271. Residue H319 is the Proton donor of the active site. A Ni(2+)-binding site is contributed by D359.

This sequence belongs to the metallo-dependent hydrolases superfamily. Urease alpha subunit family. Heterotrimer of UreA (gamma), UreB (beta) and UreC (alpha) subunits. Three heterotrimers associate to form the active enzyme. Requires Ni cation as cofactor. In terms of processing, carboxylation allows a single lysine to coordinate two nickel ions.

It is found in the cytoplasm. The enzyme catalyses urea + 2 H2O + H(+) = hydrogencarbonate + 2 NH4(+). It functions in the pathway nitrogen metabolism; urea degradation; CO(2) and NH(3) from urea (urease route): step 1/1. This Blochmanniella pennsylvanica (strain BPEN) protein is Urease subunit alpha.